A 293-amino-acid polypeptide reads, in one-letter code: Protoheme IX farnesyltransferase (293 aa).

The next 9 helical transmembrane spans lie at 9–29 (LIKP…FLLA), 38–58 (YIIL…SCVL), 86–106 (FVKN…LFLG), 111–131 (LLTI…YSLW), 137–157 (IYST…GYCT), 167–187 (WLLF…ITIF), 211–231 (IHMI…TVLG), 234–254 (SYTF…TGWY), and 271–291 (ILSI…SIFI).

The protein belongs to the UbiA prenyltransferase family. Protoheme IX farnesyltransferase subfamily.

It localises to the cell inner membrane. The catalysed reaction is heme b + (2E,6E)-farnesyl diphosphate + H2O = Fe(II)-heme o + diphosphate. The protein operates within porphyrin-containing compound metabolism; heme O biosynthesis; heme O from protoheme: step 1/1. Its function is as follows. Converts heme B (protoheme IX) to heme O by substitution of the vinyl group on carbon 2 of heme B porphyrin ring with a hydroxyethyl farnesyl side group. This chain is Protoheme IX farnesyltransferase, found in Blochmanniella floridana.